Here is a 151-residue protein sequence, read N- to C-terminus: Deoxyuridine 5'-triphosphate nucleotidohydrolase (151 aa).

A Mg(2+)-binding site is contributed by Arg-28. DUTP is bound by residues 72–74 (PRS), 86–89 (GVID), Tyr-92, Gly-97, Ile-99, and Arg-115.

This sequence belongs to the dUTPase family. Requires Mg(2+) as cofactor.

The catalysed reaction is dUTP + H2O = dUMP + diphosphate + H(+). This enzyme is involved in nucleotide metabolism: it produces dUMP, the immediate precursor of thymidine nucleotides and it decreases the intracellular concentration of dUTP so that uracil cannot be incorporated into DNA. This is Deoxyuridine 5'-triphosphate nucleotidohydrolase (OPG046) from Monkeypox virus.